The following is a 495-amino-acid chain: Adenosylhomocysteinase (495 aa).

3 residues coordinate substrate: threonine 71, aspartate 156, and glutamate 218. NAD(+) is bound at residue 219 to 221 (TTT). Lysine 248 and aspartate 252 together coordinate substrate. Residues asparagine 253, 282–287 (GYGDVG), glutamate 305, asparagine 340, 361–363 (IGH), and asparagine 409 each bind NAD(+).

Belongs to the adenosylhomocysteinase family. It depends on NAD(+) as a cofactor.

It is found in the cytoplasm. The enzyme catalyses S-adenosyl-L-homocysteine + H2O = L-homocysteine + adenosine. The protein operates within amino-acid biosynthesis; L-homocysteine biosynthesis; L-homocysteine from S-adenosyl-L-homocysteine: step 1/1. Functionally, may play a key role in the regulation of the intracellular concentration of adenosylhomocysteine. In Mycobacterium bovis (strain ATCC BAA-935 / AF2122/97), this protein is Adenosylhomocysteinase.